A 125-amino-acid polypeptide reads, in one-letter code: Large ribosomal subunit protein bL19 (125 aa).

This sequence belongs to the bacterial ribosomal protein bL19 family.

Functionally, this protein is located at the 30S-50S ribosomal subunit interface and may play a role in the structure and function of the aminoacyl-tRNA binding site. The chain is Large ribosomal subunit protein bL19 from Wolbachia sp. subsp. Brugia malayi (strain TRS).